The sequence spans 188 residues: Ribosome maturation factor RimM (188 aa).

The region spanning 93 to 166 (EDEYYDHQLI…RAVIDPPPGL (74 aa)) is the PRC barrel domain.

The protein belongs to the RimM family. Binds ribosomal protein uS19.

It is found in the cytoplasm. An accessory protein needed during the final step in the assembly of 30S ribosomal subunit, possibly for assembly of the head region. Essential for efficient processing of 16S rRNA. May be needed both before and after RbfA during the maturation of 16S rRNA. It has affinity for free ribosomal 30S subunits but not for 70S ribosomes. The protein is Ribosome maturation factor RimM of Streptomyces coelicolor (strain ATCC BAA-471 / A3(2) / M145).